Reading from the N-terminus, the 473-residue chain is UDP-N-acetylmuramate--L-alanine ligase (473 aa).

123 to 129 (GSHGKTS) contributes to the ATP binding site.

This sequence belongs to the MurCDEF family.

It localises to the cytoplasm. The catalysed reaction is UDP-N-acetyl-alpha-D-muramate + L-alanine + ATP = UDP-N-acetyl-alpha-D-muramoyl-L-alanine + ADP + phosphate + H(+). The protein operates within cell wall biogenesis; peptidoglycan biosynthesis. In terms of biological role, cell wall formation. This Prochlorococcus marinus subsp. pastoris (strain CCMP1986 / NIES-2087 / MED4) protein is UDP-N-acetylmuramate--L-alanine ligase.